A 122-amino-acid chain; its full sequence is MGFHFCIWIIFLLPPPCKKCLSPPTMNLRPPKSCGNVFYWVLVLNSGLLYKFCQTIKCRANWRPARAPRGWNEATERHQERRTQMETEMGGISTTYWHRLCTCTDRRAEKLVMDGNNCWFHK.

The first 20 residues, 1-20 (MGFHFCIWIIFLLPPPCKKC), serve as a signal peptide directing secretion.

It is found in the secreted. This is an uncharacterized protein from Homo sapiens (Human).